The following is a 224-amino-acid chain: Ribose-5-phosphate isomerase A (224 aa).

Residues 32 to 35, 85 to 88, and 98 to 101 contribute to the substrate site; these read TGST, DGAD, and KGGG. Glu107 (proton acceptor) is an active-site residue. Lys125 contacts substrate.

The protein belongs to the ribose 5-phosphate isomerase family. In terms of assembly, homodimer.

It catalyses the reaction aldehydo-D-ribose 5-phosphate = D-ribulose 5-phosphate. It participates in carbohydrate degradation; pentose phosphate pathway; D-ribose 5-phosphate from D-ribulose 5-phosphate (non-oxidative stage): step 1/1. Its function is as follows. Catalyzes the reversible conversion of ribose-5-phosphate to ribulose 5-phosphate. This is Ribose-5-phosphate isomerase A from Pseudomonas putida (strain GB-1).